Consider the following 799-residue polypeptide: LPS-assembly protein LptD (799 aa).

Positions 1–34 (MMHELDLRPHLARFAQRPLALLAWALLQGTSVNA) are cleaved as a signal peptide.

The protein belongs to the LptD family. In terms of assembly, component of the lipopolysaccharide transport and assembly complex. Interacts with LptE and LptA.

The protein resides in the cell outer membrane. Its function is as follows. Together with LptE, is involved in the assembly of lipopolysaccharide (LPS) at the surface of the outer membrane. This Albidiferax ferrireducens (strain ATCC BAA-621 / DSM 15236 / T118) (Rhodoferax ferrireducens) protein is LPS-assembly protein LptD.